The primary structure comprises 206 residues: Ras-related protein RABG3f (206 aa).

15–23 (GDSGVGKTS) contacts GTP. The short motif at 37–45 (YKATIGADF) is the Effector region element. Residues 63–67 (DTAGQ), 125–128 (NKVD), and 158–159 (SA) each bind GTP. Residues Cys204 and Cys206 are each lipidated (S-geranylgeranyl cysteine). A Cysteine methyl ester modification is found at Cys206.

The protein belongs to the small GTPase superfamily. Rab family. In terms of assembly, interacts with VPS35A.

The protein resides in the endosome membrane. It is found in the vacuole membrane. The protein localises to the prevacuolar compartment membrane. With respect to regulation, regulated by guanine nucleotide exchange factors (GEFs) which promote the exchange of bound GDP for free GTP. Regulated by the MON1-CCZ1 complex which serves as a link between Rab5 and Rab7 protein families in PVCs and mediates PVC maturation. Essential for trafficking from prevacuolar compartments to vacuoles. Involved in the trafficking of newly synthesized protein to vacuoles. Essential for plant growth. Participates in the recruitment of the core retromer components to the endosomal membrane by interacting with VPS35A. The polypeptide is Ras-related protein RABG3f (RABG3F) (Arabidopsis thaliana (Mouse-ear cress)).